Here is an 850-residue protein sequence, read N- to C-terminus: Envelope glycoprotein gp160 (850 aa).

The signal sequence occupies residues 1–28; the sequence is METQTSWLSLWRWGLMIFGMLMICSARE. The Extracellular segment spans residues 29–678; the sequence is NLWVTVYYGV…ISNWLWYIKI (650 aa). Cysteine 50 and cysteine 70 are joined by a disulfide. N-linked (GlcNAc...) asparagine; by host glycosylation is found at asparagine 84, asparagine 126, asparagine 133, asparagine 134, asparagine 139, asparagine 152, asparagine 156, asparagine 184, asparagine 193, asparagine 226, asparagine 230, asparagine 237, asparagine 258, asparagine 272, asparagine 285, asparagine 297, asparagine 327, asparagine 334, and asparagine 349. Disulfide bonds link cysteine 115–cysteine 201, cysteine 122–cysteine 192, cysteine 127–cysteine 153, cysteine 214–cysteine 243, and cysteine 224–cysteine 235. The V1 stretch occupies residues 127–152; sequence CSDVNSNNSTDSNSSASNNSPEIMKN. A V2 region spans residues 153–192; that stretch reads CSFNVTTEIRNKRKQEYALFYRQDVVPINSDNKSYILINC. The segment at 292-325 is V3; sequence CTRPNNNTRKGIHMGPGQVLYATGEIIGDIRKAY. A disulfide bridge links cysteine 292 with cysteine 326. The CD4-binding loop stretch occupies residues 357 to 367; the sequence is PSGGDIEITTH. Cystine bridges form between cysteine 371/cysteine 436 and cysteine 378/cysteine 409. The segment at 378 to 409 is V4; it reads CNTSTLFNSSWDENNIKDTNSTNDNTTITIPC. N-linked (GlcNAc...) asparagine; by host glycans are attached at residues asparagine 379, asparagine 385, asparagine 397, asparagine 402, asparagine 433, asparagine 439, asparagine 453, and asparagine 457. Positions 447-467 are disordered; that stretch reads RDGGNRNGSENGTETFRPTGG. Over residues 453–462 the composition is skewed to polar residues; sequence NGSENGTETF. 2 V5 regions span residues 453–465 and 454–465; these read NGSE…FRPT and GSENGTETFRPT. The segment at 506 to 526 is fusion peptide; it reads AVGIGAVFLGFLGTAGSTMGA. Positions 568 to 586 are immunosuppression; it reads KQLQARVLAVERYLKDQQL. Cysteine 592 and cysteine 598 are joined by a disulfide. 5 N-linked (GlcNAc...) asparagine; by host glycosylation sites follow: asparagine 605, asparagine 610, asparagine 619, asparagine 631, and asparagine 668. A coiled-coil region spans residues 627–661; that stretch reads REINNYTGIIYSLIEEAQNQQETNEKDLLALDKWT. The MPER; binding to GalCer stretch occupies residues 656 to 677; it reads ALDKWTNLWNWFNISNWLWYIK. The helical transmembrane segment at 679–699 threads the bilayer; it reads FIMIIGGLIGLRIIFAVLAIV. At 700-850 the chain is on the cytoplasmic side; that stretch reads NRVRQGYSPL…IRQGLERALL (151 aa). Positions 706 to 709 match the YXXL motif; contains endocytosis signal motif; it reads YSPL. Residue cysteine 758 is the site of S-palmitoyl cysteine; by host attachment. The Di-leucine internalization motif signature appears at 849–850; sequence LL.

Belongs to the HIV-1 env protein family. The mature envelope protein (Env) consists of a homotrimer of non-covalently associated gp120-gp41 heterodimers. The resulting complex protrudes from the virus surface as a spike. There seems to be as few as 10 spikes on the average virion. Interacts with host CD4, CCR5 and CXCR4. Gp120 also interacts with the C-type lectins CD209/DC-SIGN and CLEC4M/DC-SIGNR (collectively referred to as DC-SIGN(R)). Gp120 and gp41 interact with GalCer. Gp120 interacts with host ITGA4/ITGB7 complex; on CD4+ T-cells, this interaction results in rapid activation of integrin ITGAL/LFA-1, which facilitates efficient cell-to-cell spreading of HIV-1. Gp120 interacts with cell-associated heparan sulfate; this interaction increases virus infectivity on permissive cells and may be involved in infection of CD4- cells. As to quaternary structure, the mature envelope protein (Env) consists of a homotrimer of non-covalently associated gp120-gp41 heterodimers. The resulting complex protrudes from the virus surface as a spike. There seems to be as few as 10 spikes on the average virion. Post-translationally, highly glycosylated by host. The high number of glycan on the protein is reffered to as 'glycan shield' because it contributes to hide protein sequence from adaptive immune system. In terms of processing, palmitoylation of the transmembrane protein and of Env polyprotein (prior to its proteolytic cleavage) is essential for their association with host cell membrane lipid rafts. Palmitoylation is therefore required for envelope trafficking to classical lipid rafts, but not for viral replication. Specific enzymatic cleavages in vivo yield mature proteins. Envelope glycoproteins are synthesized as an inactive precursor that is heavily N-glycosylated and processed likely by host cell furin in the Golgi to yield the mature SU and TM proteins. The cleavage site between SU and TM requires the minimal sequence [KR]-X-[KR]-R. About 2 of the 9 disulfide bonds of gp41 are reduced by P4HB/PDI, following binding to CD4 receptor.

Its subcellular location is the virion membrane. It is found in the host cell membrane. The protein localises to the host endosome membrane. Its function is as follows. Oligomerizes in the host endoplasmic reticulum into predominantly trimers. In a second time, gp160 transits in the host Golgi, where glycosylation is completed. The precursor is then proteolytically cleaved in the trans-Golgi and thereby activated by cellular furin or furin-like proteases to produce gp120 and gp41. In terms of biological role, attaches the virus to the host lymphoid cell by binding to the primary receptor CD4. This interaction induces a structural rearrangement creating a high affinity binding site for a chemokine coreceptor like CXCR4 and/or CCR5. Acts as a ligand for CD209/DC-SIGN and CLEC4M/DC-SIGNR, which are respectively found on dendritic cells (DCs), and on endothelial cells of liver sinusoids and lymph node sinuses. These interactions allow capture of viral particles at mucosal surfaces by these cells and subsequent transmission to permissive cells. HIV subverts the migration properties of dendritic cells to gain access to CD4+ T-cells in lymph nodes. Virus transmission to permissive T-cells occurs either in trans (without DCs infection, through viral capture and transmission), or in cis (following DCs productive infection, through the usual CD4-gp120 interaction), thereby inducing a robust infection. In trans infection, bound virions remain infectious over days and it is proposed that they are not degraded, but protected in non-lysosomal acidic organelles within the DCs close to the cell membrane thus contributing to the viral infectious potential during DCs' migration from the periphery to the lymphoid tissues. On arrival at lymphoid tissues, intact virions recycle back to DCs' cell surface allowing virus transmission to CD4+ T-cells. Functionally, acts as a class I viral fusion protein. Under the current model, the protein has at least 3 conformational states: pre-fusion native state, pre-hairpin intermediate state, and post-fusion hairpin state. During fusion of viral and target intracellular membranes, the coiled coil regions (heptad repeats) assume a trimer-of-hairpins structure, positioning the fusion peptide in close proximity to the C-terminal region of the ectodomain. The formation of this structure appears to drive apposition and subsequent fusion of viral and target cell membranes. Complete fusion occurs in host cell endosomes and is dynamin-dependent, however some lipid transfer might occur at the plasma membrane. The virus undergoes clathrin-dependent internalization long before endosomal fusion, thus minimizing the surface exposure of conserved viral epitopes during fusion and reducing the efficacy of inhibitors targeting these epitopes. Membranes fusion leads to delivery of the nucleocapsid into the cytoplasm. The chain is Envelope glycoprotein gp160 from Human immunodeficiency virus type 1 group M subtype J (isolate SE9173) (HIV-1).